The sequence spans 173 residues: Translocon-associated protein subunit delta (173 aa).

The N-terminal stretch at 1 to 23 (MAAMASFGALALLLLSGLSCCSA) is a signal peptide. Residues 24-144 (EACLEPQITP…SVDHRGTWNG (121 aa)) lie on the Lumenal side of the membrane. C26 and C57 are disulfide-bonded. K73 is covalently cross-linked (Glycyl lysine isopeptide (Lys-Gly) (interchain with G-Cter in ubiquitin)). A helical transmembrane segment spans residues 145-165 (PWVSTEVLAAAIGIVIYYLAF). Residues 166–173 (SAKSHIQA) lie on the Cytoplasmic side of the membrane.

The protein belongs to the TRAP-delta family. In terms of assembly, heterotetramer of TRAP-alpha, TRAP-beta, TRAP-delta and TRAP-gamma.

The protein localises to the endoplasmic reticulum membrane. Its function is as follows. TRAP proteins are part of a complex whose function is to bind calcium to the ER membrane and thereby regulate the retention of ER resident proteins. This Rattus norvegicus (Rat) protein is Translocon-associated protein subunit delta (Ssr4).